Here is a 555-residue protein sequence, read N- to C-terminus: Vacuolar fusion protein MON1 homolog A (555 aa).

Basic and acidic residues predominate over residues M1–E12. Residues M1 to M87 form a disordered region. 2 positions are modified to phosphoserine: S31 and S56. T61 is subject to Phosphothreonine. Phosphoserine is present on S91. The disordered stretch occupies residues P114–A147.

This sequence belongs to the MON1/SAND family. As to quaternary structure, interacts with CCZ1. Found in a complex with RMC1, CCZ1, MON1A and MON1B. The MON1A-CCZ1B complex interacts with RIMOC1. The MON1A-CCZ1B complex interacts with RAB7A and this interaction is enhanced in the presence of RIMOC1.

Its function is as follows. Plays an important role in membrane trafficking through the secretory apparatus. Not involved in endocytic trafficking to lysosomes. Acts in concert with CCZ1, as a guanine exchange factor (GEF) for RAB7, promotes the exchange of GDP to GTP, converting it from an inactive GDP-bound form into an active GTP-bound form. The sequence is that of Vacuolar fusion protein MON1 homolog A (MON1A) from Macaca fascicularis (Crab-eating macaque).